A 348-amino-acid polypeptide reads, in one-letter code: Large ribosomal subunit protein uL10 (348 aa).

Positions 291–348 (LPEELRGVSAADTGAAEEEESTDEEAADADQADAAEDDDAADDDGDDEDAGDALGSLF) are disordered. Residues 305–341 (AAEEEESTDEEAADADQADAAEDDDAADDDGDDEDAG) are compositionally biased toward acidic residues.

The protein belongs to the universal ribosomal protein uL10 family. As to quaternary structure, part of the 50S ribosomal subunit. Forms part of the ribosomal stalk which helps the ribosome interact with GTP-bound translation factors. Forms a heptameric L10(L12)2(L12)2(L12)2 complex, where L10 forms an elongated spine to which the L12 dimers bind in a sequential fashion.

Its function is as follows. Forms part of the ribosomal stalk, playing a central role in the interaction of the ribosome with GTP-bound translation factors. This is Large ribosomal subunit protein uL10 from Haloferax volcanii (strain ATCC 29605 / DSM 3757 / JCM 8879 / NBRC 14742 / NCIMB 2012 / VKM B-1768 / DS2) (Halobacterium volcanii).